The following is a 483-amino-acid chain: NADPH:adrenodoxin oxidoreductase, mitochondrial (483 aa).

The N-terminal 14 residues, 1–14, are a transit peptide targeting the mitochondrion; the sequence is MSRYLARYMVSRYF. Residues alanine 32, aspartate 53, leucine 61, and leucine 97 each contribute to the FAD site. Residues 169-172, 213-214, and glutamate 225 contribute to the NADP(+) site; these read QGNV and RR. FAD is bound by residues tryptophan 391 and 398–400; that span reads GII. Residue glycine 398 participates in NADP(+) binding.

This sequence belongs to the ferredoxin--NADP reductase type 1 family. FAD serves as cofactor.

Its subcellular location is the mitochondrion. The catalysed reaction is 2 reduced [adrenodoxin] + NADP(+) + H(+) = 2 oxidized [adrenodoxin] + NADPH. Its function is as follows. Associates in vitro with the adrenodoxin-like protein MFDX1 to form an efficient low potential electron transfer chain that is able to reduce cytochrome C. Functions as accessory mitochondrial protein involved with BIO2 in the plant biotin synthase reaction. The chain is NADPH:adrenodoxin oxidoreductase, mitochondrial from Arabidopsis thaliana (Mouse-ear cress).